The following is a 353-amino-acid chain: Alcohol dehydrogenase 1 (353 aa).

Cys-47, His-70, Cys-101, Cys-104, Cys-107, Cys-115, and Cys-157 together coordinate Zn(2+). NAD(+) contacts are provided by residues 181–187 (GAGGGLG), Asp-205, Lys-210, 274–276 (IGL), and Arg-346.

Belongs to the zinc-containing alcohol dehydrogenase family. In terms of assembly, homotetramer. Zn(2+) serves as cofactor.

It localises to the cytoplasm. It catalyses the reaction a primary alcohol + NAD(+) = an aldehyde + NADH + H(+). The catalysed reaction is a secondary alcohol + NAD(+) = a ketone + NADH + H(+). The polypeptide is Alcohol dehydrogenase 1 (adh-1) (Neurospora crassa (strain ATCC 24698 / 74-OR23-1A / CBS 708.71 / DSM 1257 / FGSC 987)).